The sequence spans 71 residues: Gas vesicle protein A (71 aa).

The interval 12–22 (LAEVIDRILDK) is alpha helix 1. The interval 26–34 (VDAWVRVSL) is beta-strand 1. Residues 35 to 37 (VGI) are beta turn. Residues 38–46 (ELLAIEARI) are beta-strand 2. The segment at 51-70 (VETYLKYAEAVGLTQSAAVP) is alpha helix 2.

It belongs to the gas vesicle GvpA family. In terms of assembly, the gas vesicle shell is 2 nm thick and consists of a single layer of this protein. It forms helical ribs nearly perpendicular to the long axis of the vesicle.

It is found in the gas vesicle shell. Its function is as follows. Gas vesicles are hollow, gas filled proteinaceous nanostructures found in some microorganisms. During planktonic growth they allow positioning of the organism at a favorable depth for light or nutrient acquisition. GvpA forms the protein shell. This chain is Gas vesicle protein A, found in Microchaete diplosiphon (Fremyella diplosiphon).